Consider the following 403-residue polypeptide: Nodal homolog (403 aa).

The N-terminal stretch at methionine 1 to glycine 18 is a signal peptide. A propeptide spanning residues valine 19–arginine 278 is cleaved from the precursor. Residues asparagine 68, asparagine 133, and asparagine 169 are each glycosylated (N-linked (GlcNAc...) asparagine). The disordered stretch occupies residues alanine 195–histidine 220. Intrachain disulfides connect cysteine 303–cysteine 369, cysteine 332–cysteine 400, and cysteine 336–cysteine 402. An N-linked (GlcNAc...) asparagine glycan is attached at asparagine 341.

The protein belongs to the TGF-beta family. In terms of assembly, homodimer; disulfide-linked. Interacts with, and is inhibited by cer1 and gdf10/bmp3b.

It is found in the secreted. Functionally, cooperation and regulatory loops of multiple nodals are essential for mesendoderm patterning in early embryos. Essential for mesoderm formation and axial patterning during embryonic development. Activates the activin-like signaling pathway to induce dorsal and ventral mesoderm in animal cap ectoderm. In addition, also dorsalizes ventral marginal zone (VMZ) tissues during gastrulation. Acts in a downstream signaling cascade via cripto and cer1 to mediate cardiogenesis in embryonic mesoderm. Directs the orientation of the left-right axis by driving the left-specific gene cascade in the left lateral plate mesoderm. The polypeptide is Nodal homolog (Xenopus tropicalis (Western clawed frog)).